Reading from the N-terminus, the 312-residue chain is R2-like ligand binding oxidase (312 aa).

Residues glutamate 68, glutamate 101, and histidine 104 each contribute to the Mn(2+) site. A cross-link (3-(O4'-tyrosyl)-valine (Val-Tyr)) is located at residues 71 to 162; the sequence is VTQDIQPFMA…AAQVRASATY (92 aa). Glutamate 101 serves as a coordination point for Fe cation. 3 residues coordinate Fe cation: glutamate 167, glutamate 202, and histidine 205.

The protein belongs to the ribonucleoside diphosphate reductase small chain family. R2-like ligand binding oxidase subfamily. Homodimer. Fe cation serves as cofactor. Mn(2+) is required as a cofactor.

Its function is as follows. Probable oxidase that might be involved in lipid metabolism. The sequence is that of R2-like ligand binding oxidase from Mycobacterium sp. (strain JLS).